Consider the following 85-residue polypeptide: Beta-insect depressant toxin Lqh-dprIT3e (85 aa).

The first 21 residues, 1-21, serve as a signal peptide directing secretion; that stretch reads MKLLLLLTISASMLIEGLVNA. The 61-residue stretch at 22-82 folds into the LCN-type CS-alpha/beta domain; the sequence is DGYIRGGDGC…EWDYETDTCG (61 aa). Intrachain disulfides connect Cys-31–Cys-81, Cys-35–Cys-56, Cys-42–Cys-63, and Cys-46–Cys-65. Gly-82 bears the Glycine amide mark.

Belongs to the long (4 C-C) scorpion toxin superfamily. Sodium channel inhibitor family. Beta subfamily. Expressed by the venom gland.

The protein localises to the secreted. Depressant insect beta-toxins cause a transient contraction paralysis followed by a slow flaccid paralysis. They bind voltage-independently at site-4 of sodium channels (Nav) and block action potentials, primarily by depolarizing the axonal membrane and suppressing the sodium current. This depressant toxin is active only on insects. It is found in a relatively small amount in the venom. This chain is Beta-insect depressant toxin Lqh-dprIT3e, found in Leiurus hebraeus (Hebrew deathstalker scorpion).